The following is a 270-amino-acid chain: Putative pyruvate, phosphate dikinase regulatory protein (270 aa).

151–158 (GVSRTSKT) provides a ligand contact to ADP.

Belongs to the pyruvate, phosphate/water dikinase regulatory protein family. PDRP subfamily.

It carries out the reaction N(tele)-phospho-L-histidyl/L-threonyl-[pyruvate, phosphate dikinase] + ADP = N(tele)-phospho-L-histidyl/O-phospho-L-threonyl-[pyruvate, phosphate dikinase] + AMP + H(+). The catalysed reaction is N(tele)-phospho-L-histidyl/O-phospho-L-threonyl-[pyruvate, phosphate dikinase] + phosphate + H(+) = N(tele)-phospho-L-histidyl/L-threonyl-[pyruvate, phosphate dikinase] + diphosphate. Its function is as follows. Bifunctional serine/threonine kinase and phosphorylase involved in the regulation of the pyruvate, phosphate dikinase (PPDK) by catalyzing its phosphorylation/dephosphorylation. This chain is Putative pyruvate, phosphate dikinase regulatory protein, found in Bacillus velezensis (strain DSM 23117 / BGSC 10A6 / LMG 26770 / FZB42) (Bacillus amyloliquefaciens subsp. plantarum).